Reading from the N-terminus, the 304-residue chain is Glycine--tRNA ligase alpha subunit (304 aa).

It belongs to the class-II aminoacyl-tRNA synthetase family. Tetramer of two alpha and two beta subunits.

It localises to the cytoplasm. It carries out the reaction tRNA(Gly) + glycine + ATP = glycyl-tRNA(Gly) + AMP + diphosphate. The chain is Glycine--tRNA ligase alpha subunit from Vibrio atlanticus (strain LGP32) (Vibrio splendidus (strain Mel32)).